The sequence spans 95 residues: Putative regulatory protein STH1338 (95 aa).

It belongs to the RemA family.

The polypeptide is Putative regulatory protein STH1338 (Symbiobacterium thermophilum (strain DSM 24528 / JCM 14929 / IAM 14863 / T)).